The primary structure comprises 259 residues: Global transcriptional regulator CodY (259 aa).

Residues 1-155 form a GAF domain region; sequence MALLQKTRKI…GATVVGMEIL (155 aa). Positions 203–222 form a DNA-binding region, H-T-H motif; the sequence is ASKIADRVGITRSVIVNALR. S215 bears the Phosphoserine mark.

Belongs to the CodY family.

The protein resides in the cytoplasm. Functionally, DNA-binding global transcriptional regulator which is involved in the adaptive response to starvation and acts by directly or indirectly controlling the expression of numerous genes in response to nutrient availability. During rapid exponential growth, CodY is highly active and represses genes whose products allow adaptation to nutrient depletion. In Bacillus licheniformis (strain ATCC 14580 / DSM 13 / JCM 2505 / CCUG 7422 / NBRC 12200 / NCIMB 9375 / NCTC 10341 / NRRL NRS-1264 / Gibson 46), this protein is Global transcriptional regulator CodY.